We begin with the raw amino-acid sequence, 71 residues long: Large ribosomal subunit protein bL31 (71 aa).

Residues Cys16, Cys18, Cys38, and Cys41 each contribute to the Zn(2+) site.

This sequence belongs to the bacterial ribosomal protein bL31 family. Type A subfamily. As to quaternary structure, part of the 50S ribosomal subunit. Zn(2+) is required as a cofactor.

Its function is as follows. Binds the 23S rRNA. This chain is Large ribosomal subunit protein bL31, found in Laribacter hongkongensis (strain HLHK9).